The chain runs to 823 residues: Transcription factor SPT20 homolog-like 1 (823 aa).

Disordered stretches follow at residues 246-273, 369-524, 560-601, 631-669, and 720-757; these read SVKPQQEQSDCPPPPELRVSTSGQKEER, PRKK…AAQP, GSSF…AVQA, VLTGPQQQSHQLVSLQQLQQPTAAHPPQPGPQGSALGLS, and LRQQQPQPQPPKLQLQPQWQPKPRQEQPQSQQQQPQHI. Over residues 423 to 440 the composition is skewed to polar residues; sequence SHSSSGPASVSQLSSWKT. Composition is skewed to low complexity over residues 469 to 509, 568 to 582, and 636 to 650; these read SSSG…QKPS, APGSGAPAPAGISGS, and QQQSHQLVSLQQLQQ.

The protein belongs to the SPT20 family.

This is Transcription factor SPT20 homolog-like 1 (SUPT20HL1) from Homo sapiens (Human).